The following is an 886-amino-acid chain: UPF0592 membrane protein C7D4.03c (886 aa).

Positions 87-112 (ILNEPYNESPSSSSSDSSSRSTSPFS) are disordered. Positions 95 to 112 (SPSSSSSDSSSRSTSPFS) are enriched in low complexity. 3 helical membrane passes run 277–297 (FCAS…DHFL), 374–394 (GGFF…QFSF), and 400–420 (VIYF…LTIS).

This sequence belongs to the UPF0592 family.

The protein resides in the membrane. In Schizosaccharomyces pombe (strain 972 / ATCC 24843) (Fission yeast), this protein is UPF0592 membrane protein C7D4.03c.